The following is a 225-amino-acid chain: uncharacterized protein (225 aa).

The segment at 1–48 is disordered; it reads MTQLVTRARSARGSTLGEQPRQDQLDFADHTGTAGDGNDGAAAASGPV. Positions 20-29 are enriched in basic and acidic residues; the sequence is PRQDQLDFAD. The 73-residue stretch at 64 to 136 folds into the HTH merR-type domain; sequence GYRGPSACQI…LHNIRVAVDH (73 aa). A disordered region spans residues 201–225; sequence DGGESIAAPEDELASRRKHRDRKIG. Basic residues predominate over residues 216-225; the sequence is RRKHRDRKIG.

This is an uncharacterized protein from Mycobacterium tuberculosis (strain CDC 1551 / Oshkosh).